Reading from the N-terminus, the 612-residue chain is Proton channel OTOP1 (612 aa).

Positions 1-46 (MLEGLGSPASPRAAASASVAGSSGPAACSPPSSSAPRSPESPAPRR) are enriched in low complexity. Residues 1–50 (MLEGLGSPASPRAAASASVAGSSGPAACSPPSSSAPRSPESPAPRRGGVR) are disordered. At 1-58 (MLEGLGSPASPRAAASASVAGSSGPAACSPPSSSAPRSPESPAPRRGGVRASVPQKLA) the chain is on the cytoplasmic side. A helical membrane pass occupies residues 59–80 (EMLSSQYGLIVFVAGLLLLLAW). Topologically, residues 81–88 (AVHAAGVS) are extracellular. A helical transmembrane segment spans residues 89–112 (KSDLLCFLTALMLLQLLWMLWYVG). At 113 to 130 (RSSAHRRLFRLKDTHAGA) the chain is on the cytoplasmic side. Residues 131–153 (GWLRGSITLFAVITVILGCLKIG) traverse the membrane as a helical segment. Topologically, residues 154–163 (YFIGFSECLS) are extracellular. A helical transmembrane segment spans residues 164 to 188 (ATEGVFPVTHSVHTLLQVYFLWGHA). Topologically, residues 189-196 (KDIIQSFK) are cytoplasmic. The chain crosses the membrane as a helical span at residues 197–223 (TLERFGVIHSVFTNLLLWANGVLNESK). The Extracellular portion of the chain corresponds to 224–264 (HQLNEHKERLITLGFGNITTVLDDHTPQCNCTPPTLCTAIS). A helical membrane pass occupies residues 265–290 (HGIYYLYPFNIEYQILASTMLYVLWK). Topologically, residues 291–311 (NIGRKVDSHQHQKMQFKSDGV) are cytoplasmic. The helical transmembrane segment at 312 to 334 (MVGAVLGLTVLAATIAVVVVYLI) threads the bilayer. At 335–344 (HIGRSKTKSE) the chain is on the extracellular side. Residues 345–370 (SALIMFYLYAITLLMLMGAAGLAGIR) traverse the membrane as a helical segment. Residues 371 to 388 (IYRIDEKSLDESKNPARK) lie on the Cytoplasmic side of the membrane. The helical transmembrane segment at 389 to 413 (LDSDLLVGTASGSWLISWGSILAIL) threads the bilayer. The Extracellular segment spans residues 414-423 (CAEGHPRYTW). A helical transmembrane segment spans residues 424-444 (YNLPYSILAIVEKYIQNLFIF). The Cytoplasmic portion of the chain corresponds to 445–544 (ESIHREPEKL…QGNAKRKVLR (100 aa)). Residues 499–525 (ANGNVCMRESHDKEEEKQEESSWGGSP) are disordered. Positions 506-518 (RESHDKEEEKQEE) are enriched in basic and acidic residues. A helical membrane pass occupies residues 545-563 (NIAAFLFLCNISLWIPPAF). The Extracellular portion of the chain corresponds to 564–581 (GCRPEYDNGLEEIVFGFE). A helical transmembrane segment spans residues 582–605 (PWIIVVNLAMPFSIFYRMHAAASL). Over 606-612 (FEVYCKI) the chain is Cytoplasmic.

This sequence belongs to the otopetrin family. As to quaternary structure, homodimer. Interacts with STAT1, independently of STAT1 phosphorylation status.

It localises to the cell membrane. The protein resides in the cell projection. Its subcellular location is the microvillus. The catalysed reaction is H(+)(in) = H(+)(out). Its activity is regulated as follows. Activated by both acid and alkali, with proton influx in response to extracellular acid and proton efflux during alkali stimulation. Inhibited by Zn(2+); this inhibition is thought to be pH-sensitive. Currents evoked in response to mild acid (pH 6.0) stimulus may also be mildly potentiated by exposure to Zn(2+). Activated by NH(4)Cl. Proton-selective ion channel. Biphasically modulated by acid and alkali, mediating proton influx and efflux in response to extracellular acid and base stimulation, respectively. Sour taste receptor, which carries inward currents in response to extracellular acidification. Sensor for ammonium chloride (NH(4)Cl) in taste receptor cells. NH(4)Cl acts by increasing the intracellular pH, thereby generating a driving force for proton entry through OTOP1 channel. Might also participate in alkaline sensation. Plays a role in the regulation of Ca(2+) flux in response to purigenic (ATP, ADP and UDP) stimuli, leading to increase in cytosolic Ca(2+) due to influx of extracellular calcium. May play this role by inhibiting P2Y purinoceptor-mediated Ca(2+) release in a Ca(2+)-dependent manner and promote an influx of Ca(2+) in response to ATP. Through this mechanism and possibly others, plays a role in the formation and function of calcium carbonate-based structures in the vestibular system of the inner ear, called otoconia, that sense gravity and linear acceleration. In obesity, may attenuate adipose tissue inflammation, through the negative regulation of IFNG signaling, hence may play an adaptive role in the maintainance of metabolic homeostasis. Following alkali activation, may also be permeable Na(+), K(+), Cs(+) and Li(+). The sequence is that of Proton channel OTOP1 from Homo sapiens (Human).